The sequence spans 414 residues: tRNA (guanine-N(7)-)-methyltransferase non-catalytic subunit WDR4 (414 aa).

A2 carries the N-acetylalanine modification. WD repeat units follow at residues 60–99, 101–140, 144–184, and 187–227; these read QGSD…CLSV, TVVR…GGGR, GHLS…IESF, and GHTE…ELHC. A disordered region spans residues 377–414; the sequence is EERLQQQLEKKRRQAPPPGPNGPTKKMRAGELAQGCSS.

It belongs to the WD repeat TRM82 family. In terms of assembly, non-catalytic component of the METTL1-WDR4 complex, composed of METTL1 and WDR4. Interacts with FEN1; the interaction is direct.

It localises to the nucleus. The protein resides in the chromosome. It participates in tRNA modification; N(7)-methylguanine-tRNA biosynthesis. Functionally, non-catalytic component of the METTL1-WDR4 methyltransferase complex required for the formation of N(7)-methylguanine in a subset of RNA species, such as tRNAs, mRNAs and microRNAs (miRNAs). In the METTL1-WDR4 methyltransferase complex, WDR4 acts as a scaffold for tRNA-binding. Required for the formation of N(7)-methylguanine at position 46 (m7G46) in a large subset of tRNAs that contain the 5'-RAGGU-3' motif within the variable loop. M7G46 interacts with C13-G22 in the D-loop to stabilize tRNA tertiary structure and protect tRNAs from decay. Also required for the formation of N(7)-methylguanine at internal sites in a subset of mRNAs. Also required for methylation of a specific subset of miRNAs, such as let-7. Independently of METTL1, also plays a role in genome stability: localizes at the DNA replication site and regulates endonucleolytic activities of FEN1. In Bos taurus (Bovine), this protein is tRNA (guanine-N(7)-)-methyltransferase non-catalytic subunit WDR4.